Here is a 712-residue protein sequence, read N- to C-terminus: Polyphosphate kinase (712 aa).

Asn-49 lines the ATP pocket. The Mg(2+) site is built by Arg-398 and Arg-428. Catalysis depends on His-458, which acts as the Phosphohistidine intermediate. Tyr-491, Arg-587, and His-615 together coordinate ATP.

The protein belongs to the polyphosphate kinase 1 (PPK1) family. Mg(2+) is required as a cofactor. In terms of processing, an intermediate of this reaction is the autophosphorylated ppk in which a phosphate is covalently linked to a histidine residue through a N-P bond.

It catalyses the reaction [phosphate](n) + ATP = [phosphate](n+1) + ADP. Functionally, catalyzes the reversible transfer of the terminal phosphate of ATP to form a long-chain polyphosphate (polyP). In Parasynechococcus marenigrum (strain WH8102), this protein is Polyphosphate kinase.